The following is a 271-amino-acid chain: Uridine-cytidine kinase 1-B (271 aa).

24 to 32 serves as a coordination point for ATP; sequence GGTASGKST. 6 residues coordinate substrate: aspartate 81, tyrosine 109, histidine 114, arginine 163, arginine 172, and glutamine 180. Aspartate 209 is a binding site for ATP. A disordered region spans residues 240 to 271; it reads RSQKRTLPGQGDSGGLLLQGKRTHLESSSRPH. Low complexity predominate over residues 246-259; the sequence is LPGQGDSGGLLLQG. Over residues 262 to 271 the composition is skewed to basic and acidic residues; the sequence is THLESSSRPH.

It belongs to the uridine kinase family.

The catalysed reaction is uridine + ATP = UMP + ADP + H(+). It carries out the reaction cytidine + ATP = CMP + ADP + H(+). It functions in the pathway pyrimidine metabolism; CTP biosynthesis via salvage pathway; CTP from cytidine: step 1/3. The protein operates within pyrimidine metabolism; UMP biosynthesis via salvage pathway; UMP from uridine: step 1/1. Its function is as follows. Phosphorylates uridine and cytidine to uridine monophosphate and cytidine monophosphate. Does not phosphorylate deoxyribonucleosides or purine ribonucleosides. Can use ATP or GTP as a phosphate donor. The protein is Uridine-cytidine kinase 1-B (uck1-b) of Xenopus laevis (African clawed frog).